A 113-amino-acid chain; its full sequence is Large ribosomal subunit protein P1z (113 aa).

The segment at 87–113 (AAAPAKEEKKDEPAEESDGDLGFGLFD) is disordered. A Phosphoserine modification is found at Ser-103.

It belongs to the eukaryotic ribosomal protein P1/P2 family. In terms of assembly, P1 and P2 exist as dimers at the large ribosomal subunit.

In terms of biological role, plays an important role in the elongation step of protein synthesis. This chain is Large ribosomal subunit protein P1z (RPP1B), found in Arabidopsis thaliana (Mouse-ear cress).